Here is a 160-residue protein sequence, read N- to C-terminus: Serine-protein kinase RsbW (160 aa).

Belongs to the anti-sigma-factor family.

It catalyses the reaction L-seryl-[protein] + ATP = O-phospho-L-seryl-[protein] + ADP + H(+). It carries out the reaction L-threonyl-[protein] + ATP = O-phospho-L-threonyl-[protein] + ADP + H(+). Its function is as follows. Negative regulator of sigma-B activity. Phosphorylates and inactivates its specific antagonist protein, RsbV. Upon phosphorylation of RsbV, RsbW is released and binds to sigma-B, thereby blocking its ability to form an RNA polymerase holoenzyme (E-sigma-B). This chain is Serine-protein kinase RsbW, found in Bacillus cereus (strain ATCC 10987 / NRS 248).